We begin with the raw amino-acid sequence, 336 residues long: Holliday junction branch migration complex subunit RuvB (336 aa).

Residues Ala-4–Tyr-184 are large ATPase domain (RuvB-L). Residues Ile-23, Arg-24, Gly-65, Lys-68, Thr-69, Thr-70, Glu-131–Tyr-133, Arg-174, Tyr-184, and Arg-221 contribute to the ATP site. Thr-69 is a binding site for Mg(2+). The segment at Gln-185–Asn-255 is small ATPAse domain (RuvB-S). The tract at residues Ala-258–Pro-336 is head domain (RuvB-H). Arg-294, Arg-313, and Arg-318 together coordinate DNA.

This sequence belongs to the RuvB family. As to quaternary structure, homohexamer. Forms an RuvA(8)-RuvB(12)-Holliday junction (HJ) complex. HJ DNA is sandwiched between 2 RuvA tetramers; dsDNA enters through RuvA and exits via RuvB. An RuvB hexamer assembles on each DNA strand where it exits the tetramer. Each RuvB hexamer is contacted by two RuvA subunits (via domain III) on 2 adjacent RuvB subunits; this complex drives branch migration. In the full resolvosome a probable DNA-RuvA(4)-RuvB(12)-RuvC(2) complex forms which resolves the HJ.

It is found in the cytoplasm. It catalyses the reaction ATP + H2O = ADP + phosphate + H(+). Its function is as follows. The RuvA-RuvB-RuvC complex processes Holliday junction (HJ) DNA during genetic recombination and DNA repair, while the RuvA-RuvB complex plays an important role in the rescue of blocked DNA replication forks via replication fork reversal (RFR). RuvA specifically binds to HJ cruciform DNA, conferring on it an open structure. The RuvB hexamer acts as an ATP-dependent pump, pulling dsDNA into and through the RuvAB complex. RuvB forms 2 homohexamers on either side of HJ DNA bound by 1 or 2 RuvA tetramers; 4 subunits per hexamer contact DNA at a time. Coordinated motions by a converter formed by DNA-disengaged RuvB subunits stimulates ATP hydrolysis and nucleotide exchange. Immobilization of the converter enables RuvB to convert the ATP-contained energy into a lever motion, pulling 2 nucleotides of DNA out of the RuvA tetramer per ATP hydrolyzed, thus driving DNA branch migration. The RuvB motors rotate together with the DNA substrate, which together with the progressing nucleotide cycle form the mechanistic basis for DNA recombination by continuous HJ branch migration. Branch migration allows RuvC to scan DNA until it finds its consensus sequence, where it cleaves and resolves cruciform DNA. This Klebsiella pneumoniae (strain 342) protein is Holliday junction branch migration complex subunit RuvB.